The primary structure comprises 360 residues: Photosystem II protein D1 3 (360 aa).

3 helical membrane passes run 29-46 (YVGW…TAAI), 118-133 (HFLI…QWEL), and 142-156 (WIPV…AATA). Chlorophyll a is bound at residue H118. Y126 is a pheophytin a binding site. [CaMn4O5] cluster is bound by residues D170 and E189. The helical transmembrane segment at 197 to 218 (FHMIGVAGVFGGALFSAMHGSL) threads the bilayer. H198 provides a ligand contact to chlorophyll a. Residues H215 and 264-265 (SF) contribute to the a quinone site. H215 contributes to the Fe cation binding site. Fe cation is bound at residue H272. The helical transmembrane segment at 274–288 (FLAAWPVIGIWFAAL) threads the bilayer. The [CaMn4O5] cluster site is built by H332, E333, D342, and A344. Residues 345-360 (SGEVQPIALTAPAIAS) constitute a propeptide that is removed on maturation.

The protein belongs to the reaction center PufL/M/PsbA/D family. PSII is composed of 1 copy each of membrane proteins PsbA, PsbB, PsbC, PsbD, PsbE, PsbF, PsbH, PsbI, PsbJ, PsbK, PsbL, PsbM, PsbT, PsbX, PsbY, PsbZ, Psb30/Ycf12, peripheral proteins PsbO, CyanoQ (PsbQ), PsbU, PsbV and a large number of cofactors. It forms dimeric complexes. The D1/D2 heterodimer binds P680, chlorophylls that are the primary electron donor of PSII, and subsequent electron acceptors. It shares a non-heme iron and each subunit binds pheophytin, quinone, additional chlorophylls, carotenoids and lipids. D1 provides most of the ligands for the Mn4-Ca-O5 cluster of the oxygen-evolving complex (OEC). There is also a Cl(-1) ion associated with D1 and D2, which is required for oxygen evolution. The PSII complex binds additional chlorophylls, carotenoids and specific lipids. is required as a cofactor. Tyr-161 forms a radical intermediate that is referred to as redox-active TyrZ, YZ or Y-Z. In terms of processing, C-terminally processed by CtpA; processing is essential to allow assembly of the oxygen-evolving complex and thus photosynthetic growth.

It localises to the cellular thylakoid membrane. It carries out the reaction 2 a plastoquinone + 4 hnu + 2 H2O = 2 a plastoquinol + O2. Functionally, photosystem II (PSII) is a light-driven water:plastoquinone oxidoreductase that uses light energy to abstract electrons from H(2)O, generating O(2) and a proton gradient subsequently used for ATP formation. It consists of a core antenna complex that captures photons, and an electron transfer chain that converts photonic excitation into a charge separation. The D1/D2 (PsbA/PsbD) reaction center heterodimer binds P680, the primary electron donor of PSII as well as several subsequent electron acceptors. The polypeptide is Photosystem II protein D1 3 (Nostoc sp. (strain PCC 7120 / SAG 25.82 / UTEX 2576)).